The primary structure comprises 219 residues: Cytidylate kinase (219 aa).

Residue 21-29 (GPAASGKGT) participates in ATP binding.

Belongs to the cytidylate kinase family. Type 1 subfamily.

The protein resides in the cytoplasm. The catalysed reaction is CMP + ATP = CDP + ADP. It carries out the reaction dCMP + ATP = dCDP + ADP. This chain is Cytidylate kinase, found in Rickettsia africae (strain ESF-5).